A 2186-amino-acid chain; its full sequence is Non-reducing polyketide synthase men2 (2186 aa).

Positions 16–255 constitute a Starter acyltransferase (SAT) domain; the sequence is FFGDQTVDAL…MQLPLGTPAH (240 aa). The Ketosynthase family 3 (KS3) domain maps to 382-815; sequence SNLIAVVGQS…GGNNCVLLEE (434 aa). Residues C554, H690, and H729 each act as for beta-ketoacyl synthase activity in the active site. In terms of domain architecture, Malonyl-CoA:ACP transacylase (MAT) spans 914–1204; sequence VFAFTGQGAQ…SSLVKSTLSA (291 aa). The segment at 1299–1623 is product template (PT) domain; sequence TASLQQVRSE…TRRVLATVLG (325 aa). Residues 1303–1434 are N-terminal hotdog fold; that stretch reads QQVRSEQING…CKLHFDKRGS (132 aa). The 317-residue stretch at 1303–1619 folds into the PKS/mFAS DH domain; sequence QQVRSEQING…FQRLTRRVLA (317 aa). The active-site Proton acceptor; for dehydratase activity is H1335. Residues 1463 to 1619 form a C-terminal hotdog fold region; the sequence is TGHRLPKSVV…FQRLTRRVLA (157 aa). D1523 functions as the Proton donor; for dehydratase activity in the catalytic mechanism. The region spanning 1666–1742 is the Carrier 1 domain; sequence VGDEKADAAI…GLRRAISELS (77 aa). S1702 carries the O-(pantetheine 4'-phosphoryl)serine modification. Residues 1747 to 1785 are disordered; the sequence is GPASGSVSVSSSATTTHGMTTPSSTSSAQSSQSSQTPDG. Over residues 1749–1783 the composition is skewed to low complexity; the sequence is ASGSVSVSSSATTTHGMTTPSSTSSAQSSQSSQTP. One can recognise a Carrier 2 domain in the interval 1784-1861; sequence DGPGIYANAV…HVRRALGSDS (78 aa). An O-(pantetheine 4'-phosphoryl)serine modification is found at S1821. The segment at 1857-1878 is disordered; it reads LGSDSDGDSKPKSAPAPPAPEP. A thioesterase (TE) domain region spans residues 1921–2163; sequence LFFLPDGTGY…TMPCDHLSLL (243 aa).

Requires pantetheine 4'-phosphate as cofactor.

The protein operates within secondary metabolite biosynthesis. Non-reducing polyketide synthase; part of the gene cluster that mediates the biosynthesis of menisporopsin A, a bioactive macrocyclic polylactone. The biosynthesis of menisporopsin A is performed by a reducing (man1) and a non-reducing (men2) polyketide synthase that catalyze the formation of each menisporopsin A subunits, while the esterification and cyclolactonization activities are probably peformed by the unusual thioesterase domain of men2. First, a reduced diketide intermediate, 3-hydroxybutyryl-S-ACP is produced by men1 and transferred to men2; this is followed by a second reduced diketide which is further elongated using 3 units of malonyl-coA to form a reduced pentaketide. The cyclization of this intermediate by the PT domain forms the second subunit, 2,4-dihydroxy-6-(2-hydroxy-n-propyl)benzoyl-S-ACP. The TE domain of men2 then esterifies the secondary hydroxyl group on the side chain of the second subunit with the acyl-TE of the first subunit to form the first ester intermediate. This process occurs iteratively to form a linear tetraester intermediate. The final subunit is formed by a similar process, except that an extra malonyl-CoA is required in an additional elongation step to form a reduced hexaketide intermediate, and the carbonyl group next to the secondary hydroxyl group is reduced by a trans-acting ketoreductase. Again, the PT domain catalyzes cyclization to form the largest subunit, 2,4-dihydroxy-6-(2,4-dihydroxy-n-pentyl) benzoyl-S-ACP. Then the linear pentaester intermediate is formed. In this step, if the intermediate transfer rate is slow, intra- molecular cyclization involving the secondary hydroxyl group of the pentaester intermediate may occur to form menisporopsin B. Alternatively, transfer of the pentaester intermediate to the TE domain would allow cyclolactonization to be catalyzed by the TE to form menisporopsin A. In Menisporopsis theobromae, this protein is Non-reducing polyketide synthase men2.